The sequence spans 55 residues: Large ribosomal subunit protein bL33 (55 aa).

It belongs to the bacterial ribosomal protein bL33 family.

The sequence is that of Large ribosomal subunit protein bL33 from Methylobacterium sp. (strain 4-46).